Here is a 609-residue protein sequence, read N- to C-terminus: Dihydroxy-acid dehydratase (609 aa).

Asp82 contributes to the Mg(2+) binding site. Cys123 contributes to the [2Fe-2S] cluster binding site. Residues Asp124 and Lys125 each coordinate Mg(2+). Lys125 is subject to N6-carboxylysine. Residue Cys192 participates in [2Fe-2S] cluster binding. Residue Glu489 participates in Mg(2+) binding. The active-site Proton acceptor is the Ser515.

This sequence belongs to the IlvD/Edd family. As to quaternary structure, homodimer. Requires [2Fe-2S] cluster as cofactor. The cofactor is Mg(2+).

It carries out the reaction (2R)-2,3-dihydroxy-3-methylbutanoate = 3-methyl-2-oxobutanoate + H2O. It catalyses the reaction (2R,3R)-2,3-dihydroxy-3-methylpentanoate = (S)-3-methyl-2-oxopentanoate + H2O. It functions in the pathway amino-acid biosynthesis; L-isoleucine biosynthesis; L-isoleucine from 2-oxobutanoate: step 3/4. Its pathway is amino-acid biosynthesis; L-valine biosynthesis; L-valine from pyruvate: step 3/4. Its function is as follows. Functions in the biosynthesis of branched-chain amino acids. Catalyzes the dehydration of (2R,3R)-2,3-dihydroxy-3-methylpentanoate (2,3-dihydroxy-3-methylvalerate) into 2-oxo-3-methylpentanoate (2-oxo-3-methylvalerate) and of (2R)-2,3-dihydroxy-3-methylbutanoate (2,3-dihydroxyisovalerate) into 2-oxo-3-methylbutanoate (2-oxoisovalerate), the penultimate precursor to L-isoleucine and L-valine, respectively. The chain is Dihydroxy-acid dehydratase from Azobacteroides pseudotrichonymphae genomovar. CFP2.